Consider the following 439-residue polypeptide: MRLSKFFLPVSKEAPADAAIVSHQLMLRTGMIRQNGAGIYSWLPLGYRVLKRIEQIVREEMNRAGAIEMLMPTLQQADLWRESGRYDDYGKEMLRIKDRHERDMLYGPTNEELITDVFRTYVKSYKQLPLNLYHQQWKFRDEVRPRFGVMRGREFLMKDAYSFDLTEEDARAAYRKMFCAYLNAFDRMGLTAIPMRADTGPIGGDLSHEFIILADTGESAVFCDKALLDLPAPGLDLDFESDLTPFVTERTGYYAATEEMHDEAAFNALPEDRRVSARGIEVGHIFFFGTKYSKPMNAVVQGPDGQMVPVQMGSYGIGVSRLLGAIIEACHDENGIVWPESVAPFDVGLINMRPGNEACDAACNTLYAALTAAGREVLYDETDDRAGAKFARMDLIGLPWQTTVGPRGVTEGKVEVKNRKTGEKHDVKIEDMLAQLKGS.

It belongs to the class-II aminoacyl-tRNA synthetase family. ProS type 2 subfamily. Homodimer.

Its subcellular location is the cytoplasm. It carries out the reaction tRNA(Pro) + L-proline + ATP = L-prolyl-tRNA(Pro) + AMP + diphosphate. Its function is as follows. Catalyzes the attachment of proline to tRNA(Pro) in a two-step reaction: proline is first activated by ATP to form Pro-AMP and then transferred to the acceptor end of tRNA(Pro). In Hyphomonas neptunium (strain ATCC 15444), this protein is Proline--tRNA ligase.